The chain runs to 271 residues: 3-methyl-2-oxobutanoate hydroxymethyltransferase (271 aa).

Asp-50 and Asp-89 together coordinate Mg(2+). 3-methyl-2-oxobutanoate is bound by residues 50–51 (DS), Asp-89, and Lys-118. A Mg(2+)-binding site is contributed by Glu-120. Glu-187 (proton acceptor) is an active-site residue.

This sequence belongs to the PanB family. Homodecamer; pentamer of dimers. It depends on Mg(2+) as a cofactor.

Its subcellular location is the cytoplasm. It carries out the reaction 3-methyl-2-oxobutanoate + (6R)-5,10-methylene-5,6,7,8-tetrahydrofolate + H2O = 2-dehydropantoate + (6S)-5,6,7,8-tetrahydrofolate. Its pathway is cofactor biosynthesis; (R)-pantothenate biosynthesis; (R)-pantoate from 3-methyl-2-oxobutanoate: step 1/2. Catalyzes the reversible reaction in which hydroxymethyl group from 5,10-methylenetetrahydrofolate is transferred onto alpha-ketoisovalerate to form ketopantoate. The polypeptide is 3-methyl-2-oxobutanoate hydroxymethyltransferase (Campylobacter concisus (strain 13826)).